We begin with the raw amino-acid sequence, 34 residues long: Photosystem II reaction center protein M (34 aa).

The chain crosses the membrane as a helical span at residues 5–25 (ILAFIATALFILVPTAFLLII).

Belongs to the PsbM family. PSII is composed of 1 copy each of membrane proteins PsbA, PsbB, PsbC, PsbD, PsbE, PsbF, PsbH, PsbI, PsbJ, PsbK, PsbL, PsbM, PsbT, PsbX, PsbY, PsbZ, Psb30/Ycf12, at least 3 peripheral proteins of the oxygen-evolving complex and a large number of cofactors. It forms dimeric complexes.

The protein resides in the plastid. It is found in the chloroplast thylakoid membrane. Functionally, one of the components of the core complex of photosystem II (PSII). PSII is a light-driven water:plastoquinone oxidoreductase that uses light energy to abstract electrons from H(2)O, generating O(2) and a proton gradient subsequently used for ATP formation. It consists of a core antenna complex that captures photons, and an electron transfer chain that converts photonic excitation into a charge separation. This subunit is found at the monomer-monomer interface. The chain is Photosystem II reaction center protein M from Cenchrus americanus (Pearl millet).